A 318-amino-acid chain; its full sequence is NAD kinase (318 aa).

Asp-84 serves as the catalytic Proton acceptor. NAD(+) is bound by residues 84–85 (DG), Arg-89, 159–160 (NE), Arg-170, Asp-189, and 200–205 (TAYAFS).

Belongs to the NAD kinase family. A divalent metal cation is required as a cofactor.

It localises to the cytoplasm. It carries out the reaction NAD(+) + ATP = ADP + NADP(+) + H(+). Its function is as follows. Involved in the regulation of the intracellular balance of NAD and NADP, and is a key enzyme in the biosynthesis of NADP. Catalyzes specifically the phosphorylation on 2'-hydroxyl of the adenosine moiety of NAD to yield NADP. The chain is NAD kinase from Cutibacterium acnes (strain DSM 16379 / KPA171202) (Propionibacterium acnes).